Reading from the N-terminus, the 685-residue chain is Keratin, type II cytoskeletal 2 epidermal (685 aa).

The interval 1-20 is disordered; sequence MSCQISCKSRRGGGGGGGGG. The interval 1–196 is head; sequence MSCQISCKSR…DPEIQNVKSQ (196 aa). Position 22 is an asymmetric dimethylarginine (R22). S25 and S28 each carry phosphoserine. At R52 the chain carries Omega-N-methylarginine. Residue S64 is modified to Phosphoserine. Residues 197 to 232 form a coil 1A region; that stretch reads EREQIKTLNNKFASFIDTVRFLEQQNQVLHTKWELL. The region spanning 197-511 is the IF rod domain; sequence EREQIKTLNN…KLLEGEECRM (315 aa). A linker 1 region spans residues 233-251; that stretch reads QQLDVGTRTTNLDPVFQAY. Positions 252–343 are coil 1B; that stretch reads IGILKKQVDR…TLYDTELSQL (92 aa). Positions 344 to 367 are linker 12; that stretch reads QQNVTDTNVILSMDNNRNLDLDSI. The segment at 368-507 is coil 2; sequence IAEVQSQYEI…ATYRKLLEGE (140 aa). Residues 508–685 are tail; it reads ECRMSGDFSD…CGSGVTFSFR (178 aa). The segment at 532 to 685 is disordered; the sequence is VASKAGFGSG…CGSGVTFSFR (154 aa). The span at 538–678 shows a compositional bias: gly residues; the sequence is FGSGGQSSGG…GSGSGEGCGS (141 aa). An omega-N-methylarginine mark is found at R554, R588, R603, and R653.

This sequence belongs to the intermediate filament family. In terms of assembly, heterotetramer of two type I and two type II keratins. Associates with KRT10.

It localises to the cytoplasm. In terms of biological role, probably contributes to terminal cornification. Associated with keratinocyte activation, proliferation and keratinization. Required for maintenance of corneocytes and keratin filaments in suprabasal keratinocytes in the epidermis of the ear, potentially via moderation of expression and localization of keratins and their partner proteins. Plays a role in the establishment of the epidermal barrier on plantar skin. The chain is Keratin, type II cytoskeletal 2 epidermal from Rattus norvegicus (Rat).